The following is a 543-amino-acid chain: MKKEFLMFLFALLIIPIIGIFIIWSTQFYSKMYQYPFYYMPYPFKKVVITEGANSCMLKDGSWSQVVLTDSDDMFIQNETAPKVVAFIISILNLMVSLLVYILFDFSNNQFQFIQEHYDLSFYDIYLGVDGISIYFVLLTTIIIPIALMSNWNSITNNVKSYLIIMLLLETLLLAVFLVLDILLFYIFFESILPPLFILIGLFGSSNKVRASFYIFLYTLLGSLFLLLSILTMSSIMGTTYFDALLKSNFDYTIQIFLFCGIFIAFAVKTPTIFLNNWLLKAHVESPLGGSIVLAGIVLKLSLYGIFRLILPLLPKASLNYTYIIFVIGVITIIYASFSTLRTTDIKELIAYSSVSHAAVYLIGVFSNTIQGIEGGILLGLAHGFTSPALFFIVGGVLYDRSGTRLIHYYKGIAQMAPLLSLLFFIFSLANCGVPLTLNFVGEFMSLYGVFERLPLLGLLASSSIVFSAAYSIFLFNRVAFGGSFSKFFENSIIDLTKREFYALIFLGVLVVFLGIYPSIILDGLHYNVSSLIYSYGCKFCLG.

The next 14 membrane-spanning stretches (helical) occupy residues 5–25 (FLMF…IIWS), 84–104 (VVAF…YILF), 129–149 (VDGI…IALM), 161–181 (SYLI…LVLD), 182–202 (ILLF…LIGL), 213–233 (FYIF…ILTM), 254–274 (IQIF…PTIF), 287–307 (PLGG…YGIF), 321–341 (YTYI…FSTL), 350–370 (IAYS…SNTI), 377–397 (ILLG…VGGV), 416–436 (MAPL…GVPL), 456–476 (LLGL…IFLF), and 501–521 (FYAL…PSII).

The protein belongs to the complex I subunit 4 family.

It localises to the mitochondrion membrane. The enzyme catalyses a ubiquinone + NADH + 5 H(+)(in) = a ubiquinol + NAD(+) + 4 H(+)(out). Functionally, core subunit of the mitochondrial membrane respiratory chain NADH dehydrogenase (Complex I) that is believed to belong to the minimal assembly required for catalysis. Complex I functions in the transfer of electrons from NADH to the respiratory chain. The immediate electron acceptor for the enzyme is believed to be ubiquinone. This Neurospora crassa (strain ATCC 24698 / 74-OR23-1A / CBS 708.71 / DSM 1257 / FGSC 987) protein is NADH-ubiquinone oxidoreductase chain 4 (ndh-4).